Reading from the N-terminus, the 398-residue chain is 8-amino-7-oxononanoate synthase (398 aa).

Arginine 26 is a binding site for substrate. 113-114 (GF) lines the pyridoxal 5'-phosphate pocket. Histidine 138 is a binding site for substrate. Serine 181, histidine 209, and threonine 238 together coordinate pyridoxal 5'-phosphate. An N6-(pyridoxal phosphate)lysine modification is found at lysine 241. Substrate is bound at residue threonine 355.

Belongs to the class-II pyridoxal-phosphate-dependent aminotransferase family. BioF subfamily. As to quaternary structure, homodimer. Pyridoxal 5'-phosphate is required as a cofactor.

The enzyme catalyses 6-carboxyhexanoyl-[ACP] + L-alanine + H(+) = (8S)-8-amino-7-oxononanoate + holo-[ACP] + CO2. It functions in the pathway cofactor biosynthesis; biotin biosynthesis. In terms of biological role, catalyzes the decarboxylative condensation of pimeloyl-[acyl-carrier protein] and L-alanine to produce 8-amino-7-oxononanoate (AON), [acyl-carrier protein], and carbon dioxide. The sequence is that of 8-amino-7-oxononanoate synthase from Aeromonas hydrophila subsp. hydrophila (strain ATCC 7966 / DSM 30187 / BCRC 13018 / CCUG 14551 / JCM 1027 / KCTC 2358 / NCIMB 9240 / NCTC 8049).